Consider the following 379-residue polypeptide: Cytochrome b (379 aa).

4 helical membrane-spanning segments follow: residues 34 to 54, 78 to 99, 114 to 134, and 179 to 199; these read FGSL…LLAM, WLIR…YFHI, WNTG…GYVL, and FFAL…IHLT. Positions 84 and 98 each coordinate heme b. Heme b-binding residues include His183 and His197. Residue His202 coordinates a ubiquinone. 4 consecutive transmembrane segments (helical) span residues 227 to 247, 289 to 309, 321 to 341, and 348 to 368; these read LKDI…TFFS, LGGV…PLLH, FSQV…WVGS, and FIAI…VLFP.

This sequence belongs to the cytochrome b family. As to quaternary structure, the cytochrome bc1 complex contains 11 subunits: 3 respiratory subunits (MT-CYB, CYC1 and UQCRFS1), 2 core proteins (UQCRC1 and UQCRC2) and 6 low-molecular weight proteins (UQCRH/QCR6, UQCRB/QCR7, UQCRQ/QCR8, UQCR10/QCR9, UQCR11/QCR10 and a cleavage product of UQCRFS1). This cytochrome bc1 complex then forms a dimer. Heme b is required as a cofactor.

The protein resides in the mitochondrion inner membrane. Component of the ubiquinol-cytochrome c reductase complex (complex III or cytochrome b-c1 complex) that is part of the mitochondrial respiratory chain. The b-c1 complex mediates electron transfer from ubiquinol to cytochrome c. Contributes to the generation of a proton gradient across the mitochondrial membrane that is then used for ATP synthesis. This Apteryx australis (Southern brown kiwi) protein is Cytochrome b (MT-CYB).